The sequence spans 168 residues: D-aminoacyl-tRNA deacylase 2 (168 aa).

Positions 160-161 (GP) match the Gly-transPro motif, allows the protein to recognize chirality of D-amino acids motif.

Belongs to the DTD family. Homodimer.

Its subcellular location is the cytoplasm. It catalyses the reaction a D-aminoacyl-tRNA + H2O = a tRNA + a D-alpha-amino acid + H(+). The catalysed reaction is glycyl-tRNA(Ala) + H2O = tRNA(Ala) + glycine + H(+). It carries out the reaction D-tyrosyl-tRNA(Tyr) + H2O = D-tyrosine + tRNA(Tyr). The enzyme catalyses L-alanyl-tRNA(Thr) + H2O = tRNA(Thr) + L-alanine + H(+). In terms of biological role, deacylates mischarged D-aminoacyl-tRNAs. Also deacylates mischarged glycyl-tRNA(Ala), protecting cells against glycine mischarging by AlaRS. Probably acts by rejecting L-amino acids from its binding site rather than specific recognition of D-amino acids. Catalyzes the hydrolysis of D-tyrosyl-tRNA(Tyr), has no activity on correctly charged L-tyrosyl-tRNA(Tyr). By recycling D-aminoacyl-tRNA to D-amino acids and free tRNA molecules, this enzyme counteracts the toxicity associated with the formation of D-aminoacyl-tRNA entities in vivo and helps enforce protein L-homochirality. In contrast to DTD1, deacylates L-Ala mischarged on tRNA(Thr)(G4.U69) by alanine-tRNA ligase AARS. Can deacylate L-Ala due to a relaxed specificity for substrate chirality caused by the trans conformation of the Gly-Pro motif in the active site. Also hydrolyzes correctly charged, achiral, glycyl-tRNA(Gly) in vitro, although in vivo EEF1A1/EF-Tu may protect cognate achiral glycyl-tRNA(Gly) from DTD2-mediated deacetylation. This chain is D-aminoacyl-tRNA deacylase 2 (DTD2), found in Homo sapiens (Human).